A 106-amino-acid polypeptide reads, in one-letter code: MICOS complex subunit MIC12 (106 aa).

A helical membrane pass occupies residues 11–27 (VKWTLSVGVIGSVFYLY).

It belongs to the MICOS complex subunit Mic12 family. In terms of assembly, component of the mitochondrial contact site and cristae organizing system (MICOS) complex.

Its subcellular location is the mitochondrion inner membrane. In terms of biological role, component of the MICOS complex, a large protein complex of the mitochondrial inner membrane that plays crucial roles in the maintenance of crista junctions, inner membrane architecture, and formation of contact sites to the outer membrane. The protein is MICOS complex subunit MIC12 (AIM5) of Saccharomyces cerevisiae (strain RM11-1a) (Baker's yeast).